The primary structure comprises 207 residues: Ras-related protein Rab-2A (207 aa).

Position 12 to 20 (12 to 20 (GDTGVGKSC)) interacts with GTP. Positions 34 to 42 (HDLTIGVEF) match the Effector region motif. GTP is bound by residues 60 to 64 (DTAGQ), 118 to 121 (NKSD), and 148 to 150 (SAK). The disordered stretch occupies residues 187–207 (GAPTSKQDGTDQKPAGGGCCK). S-geranylgeranyl cysteine attachment occurs at residues C205 and C206.

It belongs to the small GTPase superfamily. Rab family.

The protein localises to the cell membrane. It carries out the reaction GTP + H2O = GDP + phosphate + H(+). With respect to regulation, regulated by guanine nucleotide exchange factors (GEFs) which promote the exchange of bound GDP for free GTP, GTPase activating proteins (GAPs) which increase the GTP hydrolysis activity, and GDP dissociation inhibitors which inhibit the dissociation of the nucleotide from the GTPase. Functionally, the small GTPases Rab are key regulators of intracellular membrane trafficking, from the formation of transport vesicles to their fusion with membranes. Rabs cycle between active GTP-bound and inactive GDP-bound states. In their active state, drive transport of vesicular carriers from donor organelles to acceptor organelles to regulate the membrane traffic that maintains organelle identity and morphology. This is Ras-related protein Rab-2A (rab2A) from Dictyostelium discoideum (Social amoeba).